The following is a 562-amino-acid chain: MAELAAGGDQRAALLAAATLFPPPPDGARFSYGTAGFRAEGAAMGPAVCRAGVVAALRSAKLGGAAVGVVITASHNPVRDNGVKIVDADGGMLSQDWEPFADALANAPNPDALLQIVLQFAKDEDIKLGGSHSAQVLLARDTRPTGEYLLDVAVKGVNAVIGAVAVDMGILTTPQLHWMVRSKNKGLKSSETDYFSQVIDSFRCLLELVPKDKEADVINNRLIVDGANGIGGLKLEEIKAKISGLDIHVRNSGKGEGILNESCGADFVQKEKVVPLGFGPEDVGFRCASFDGDADRLVYFRIVSSSDTRIDLVDGDKILSLFVLFIREQLDIINGKDNKGNEVLPTRFGVIQTAYANGASTDFLKNIGLEVVFTPTGVKYLHKEALKYDIGIYFEANGHGTVLFSDHFVSQLESLTSEFSSKAAGSSQHQAAMRLLATSQLINQAVGDALSGMLLVEAVLQYKGWSFQNWCDLYTDLPSRQLKVKVQDRNSIVTTDAERRVCQPNGLQELIDGEISNYSHGRCFVRPSGTEDVVRVYAEASSEEAADCLAKRVAQHVERILG.

Residue Ser-74 is the Phosphoserine intermediate of the active site. The Mg(2+) site is built by Ser-74, Asp-291, Asp-293, and Asp-295. Substrate is bound by residues 395 to 397 (EAN), 526 to 530 (RPSGT), and Arg-535.

The protein belongs to the phosphohexose mutase family. Requires Mg(2+) as cofactor.

The enzyme catalyses N-acetyl-alpha-D-glucosamine 1-phosphate = N-acetyl-D-glucosamine 6-phosphate. The protein operates within nucleotide-sugar biosynthesis; UDP-N-acetyl-alpha-D-glucosamine biosynthesis; N-acetyl-alpha-D-glucosamine 1-phosphate from alpha-D-glucosamine 6-phosphate (route I): step 2/2. Interconverts GlcNAc-6-P and GlcNAc-1-P. In Oryza sativa subsp. japonica (Rice), this protein is Phosphoacetylglucosamine mutase.